The chain runs to 297 residues: Homoserine kinase (297 aa).

Position 82–92 (82–92) interacts with ATP; that stretch reads PVSRGLGSSAA.

Belongs to the GHMP kinase family. Homoserine kinase subfamily.

Its subcellular location is the cytoplasm. The enzyme catalyses L-homoserine + ATP = O-phospho-L-homoserine + ADP + H(+). The protein operates within amino-acid biosynthesis; L-threonine biosynthesis; L-threonine from L-aspartate: step 4/5. Its function is as follows. Catalyzes the ATP-dependent phosphorylation of L-homoserine to L-homoserine phosphate. This is Homoserine kinase from Clostridium botulinum (strain Langeland / NCTC 10281 / Type F).